Consider the following 370-residue polypeptide: Maturase K (370 aa).

It belongs to the intron maturase 2 family. MatK subfamily.

The protein localises to the plastid. It is found in the chloroplast. Functionally, usually encoded in the trnK tRNA gene intron. Probably assists in splicing its own and other chloroplast group II introns. This chain is Maturase K, found in Marchantia polymorpha (Common liverwort).